We begin with the raw amino-acid sequence, 610 residues long: ESX-5 secretion system protein EccA5 (610 aa).

357–364 (GPPGTGKT) is a binding site for ATP.

It belongs to the CbxX/CfxQ family. As to quaternary structure, part of the ESX-5 / type VII secretion system (T7SS), which is composed of cytosolic and membrane components.

Its subcellular location is the cytoplasm. In terms of biological role, part of the ESX-5 specialized secretion system, which is responsible for the secretion of EsxN and a number of PE_PGRS and PPE proteins. EccA5 exhibits ATPase activity and may provide energy for the export of ESX-5 substrates. The sequence is that of ESX-5 secretion system protein EccA5 from Mycobacterium marinum (strain ATCC BAA-535 / M).